An 817-amino-acid chain; its full sequence is Dynamin-related protein 5A (817 aa).

Over residues 1-20 (MANSNTYLTTPTKTPSSRRN) the composition is skewed to polar residues. The disordered stretch occupies residues 1 to 37 (MANSNTYLTTPTKTPSSRRNQQSQSKMQSHSKDPINA). Positions 59-346 (KLPIPEIVAI…LQKRYKEAAP (288 aa)) constitute a Dynamin-type G domain. A G1 motif region spans residues 69–76 (GGQSDGKS). 69–76 (GGQSDGKS) is a binding site for GTP. The tract at residues 95 to 97 (GTR) is G2 motif. Positions 175–178 (DTPG) are G3 motif. Residues 175-179 (DTPGF) and 244-247 (SKFD) contribute to the GTP site. Residues 244 to 247 (SKFD) are G4 motif. The G5 motif stretch occupies residues 280–283 (LPKD). Disordered regions lie at residues 405–425 (APEQ…IGSW) and 616–658 (LSDT…ETPS). Residues 618-629 (DTSRDEPMKDQE) show a composition bias toward basic and acidic residues.

The protein belongs to the TRAFAC class dynamin-like GTPase superfamily. Dynamin/Fzo/YdjA family. As to expression, expressed in root and leaf meristems.

It localises to the cytoplasm. Its subcellular location is the cytoskeleton. The protein resides in the phragmoplast. Its function is as follows. Probable microtubule-associated force-producing protein that is targeted to the forming cell plate during cytokinesis. May play a role in cell division. This Arabidopsis thaliana (Mouse-ear cress) protein is Dynamin-related protein 5A (DRP5A).